The following is a 496-amino-acid chain: Nitric oxide synthase, inducible (496 aa).

Residues cysteine 6, glutamate 32, and glutamine 36 each coordinate FMN. Residues 101–341 (KNLFTMRLRS…VRSVSGFQLP (241 aa)) enclose the FAD-binding FR-type domain. Position 121 (arginine 121) interacts with NADP(+). Residues histidine 143, arginine 277, tyrosine 279, serine 280, threonine 295, and alanine 297 each coordinate FAD. Position 300 (threonine 300) interacts with NADP(+). Positions 301, 314, 315, and 316 each coordinate FAD. Positions 355, 388, 417, 418, 424, 426, 428, and 461 each coordinate NADP(+).

The protein belongs to the NOS family. As to quaternary structure, homodimer. Interacts with NHERF1. Interacts with GAPDH; induced by oxidatively-modified low-densitity lipoprotein (LDL(ox)). Interacts with S100A8 and S100A9 to form the iNOS-S100A8/9 transnitrosylase complex. Interacts with SPSB1, SPSB2 and SPSB4. Interacts with ELOC and CUL5 in the presence of SPSB1 or SPSB2 or SPSB4. Forms a complex with ASL, ASS1 and HSP90AA1; the complex regulates cell-autonomous L-arginine synthesis and citrulline recycling while channeling extracellular L-arginine to nitric oxide synthesis pathway. Heme b is required as a cofactor. Requires FAD as cofactor. FMN serves as cofactor. The cofactor is (6R)-L-erythro-5,6,7,8-tetrahydrobiopterin. Polyubiquitinated; mediated by SPSB1, SPSB2 and SPSB4, leading to proteasomal degradation.

It localises to the cytoplasm. The protein resides in the cytosol. It catalyses the reaction 2 L-arginine + 3 NADPH + 4 O2 + H(+) = 2 L-citrulline + 2 nitric oxide + 3 NADP(+) + 4 H2O. Its activity is regulated as follows. Not stimulated by calcium/calmodulin. In terms of biological role, produces nitric oxide (NO) which is a messenger molecule with diverse functions throughout the body. In macrophages, NO mediates tumoricidal and bactericidal actions. Also has nitrosylase activity and mediates cysteine S-nitrosylation of cytoplasmic target proteins such PTGS2/COX2. As component of the iNOS-S100A8/9 transnitrosylase complex involved in the selective inflammatory stimulus-dependent S-nitrosylation of GAPDH implicated in regulation of the GAIT complex activity and probably multiple targets including ANXA5, EZR, MSN and VIM. Involved in inflammation, enhances the synthesis of pro-inflammatory mediators such as IL6 and IL8. The chain is Nitric oxide synthase, inducible (NOS2) from Oryctolagus cuniculus (Rabbit).